Here is a 266-residue protein sequence, read N- to C-terminus: Imidazole glycerol phosphate synthase subunit HisF (266 aa).

Active-site residues include Asp11 and Asp130.

It belongs to the HisA/HisF family. Heterodimer of HisH and HisF.

Its subcellular location is the cytoplasm. The enzyme catalyses 5-[(5-phospho-1-deoxy-D-ribulos-1-ylimino)methylamino]-1-(5-phospho-beta-D-ribosyl)imidazole-4-carboxamide + L-glutamine = D-erythro-1-(imidazol-4-yl)glycerol 3-phosphate + 5-amino-1-(5-phospho-beta-D-ribosyl)imidazole-4-carboxamide + L-glutamate + H(+). It participates in amino-acid biosynthesis; L-histidine biosynthesis; L-histidine from 5-phospho-alpha-D-ribose 1-diphosphate: step 5/9. In terms of biological role, IGPS catalyzes the conversion of PRFAR and glutamine to IGP, AICAR and glutamate. The HisF subunit catalyzes the cyclization activity that produces IGP and AICAR from PRFAR using the ammonia provided by the HisH subunit. The polypeptide is Imidazole glycerol phosphate synthase subunit HisF (Verminephrobacter eiseniae (strain EF01-2)).